The sequence spans 406 residues: Mitochondrial ribosome-associated GTPase 2 (406 aa).

The segment at 15-406 (FEGVGHWALS…LGQGRQPLRW (392 aa)) is localized in the mitochondria. Residues 30-406 (KPSRLLPQQA…LGQGRQPLRW (377 aa)) are not localized in the mitochondria. In terms of domain architecture, Obg spans 70–224 (RYFVDYRRVL…RVLHLELKTV (155 aa)). In terms of domain architecture, OBG-type G spans 225 to 390 (AHAGMVGFPN…LLLHLKVLYD (166 aa)). Residues 231–238 (GFPNAGKS), 256–260 (FTTLK), 278–281 (DIPG), 345–348 (NKID), and 371–373 (SAL) each bind GTP. Mg(2+) contacts are provided by Ser238 and Thr258.

It belongs to the TRAFAC class OBG-HflX-like GTPase superfamily. OBG GTPase family. In terms of assembly, associates with the mitochondrial ribosome large subunit; the association occurs in a GTP-dependent manner. It depends on Mg(2+) as a cofactor.

The protein resides in the mitochondrion. Its subcellular location is the mitochondrion inner membrane. In terms of biological role, plays a role in the regulation of the mitochondrial ribosome assembly and of translational activity. Displays GTPase activity. Involved in the ribosome maturation process. The polypeptide is Mitochondrial ribosome-associated GTPase 2 (MTG2) (Pongo abelii (Sumatran orangutan)).